The primary structure comprises 187 residues: Ethylene-responsive transcription factor ERF015 (187 aa).

The AP2/ERF DNA-binding region spans 26-83 (CYRGVRKRSWGKWVSEIRVPKTGRRIWLGSYDAPEKAARAYDAALFCIRGEKGVYNFP).

It belongs to the AP2/ERF transcription factor family. ERF subfamily.

It is found in the nucleus. In terms of biological role, probably acts as a transcriptional activator. Binds to the GCC-box pathogenesis-related promoter element. May be involved in the regulation of gene expression by stress factors and by components of stress signal transduction pathways. The protein is Ethylene-responsive transcription factor ERF015 (ERF015) of Arabidopsis thaliana (Mouse-ear cress).